A 230-amino-acid polypeptide reads, in one-letter code: Ion-translocating oxidoreductase complex subunit E (230 aa).

Helical transmembrane passes span 18–38 (ALVQ…ITNA), 39–59 (LGLG…VSLI), 69–89 (IPVF…LMNA), 93–113 (GLYL…IIIG), 124–144 (VLPA…VLVV), and 182–202 (SFLL…LIAL).

Belongs to the NqrDE/RnfAE family. In terms of assembly, the complex is composed of six subunits: RnfA, RnfB, RnfC, RnfD, RnfE and RnfG.

The protein resides in the cell inner membrane. Functionally, part of a membrane-bound complex that couples electron transfer with translocation of ions across the membrane. The sequence is that of Ion-translocating oxidoreductase complex subunit E from Vibrio parahaemolyticus serotype O3:K6 (strain RIMD 2210633).